The primary structure comprises 208 residues: Small ribosomal subunit protein eS8 (208 aa).

The segment at 1–23 (MGISRDSAHKRRATGGKRKSLRK) is disordered. A compositionally biased stretch (basic residues) spans 8 to 23 (AHKRRATGGKRKSLRK).

It belongs to the eukaryotic ribosomal protein eS8 family. Component of the small ribosomal subunit. Identified in a IGF2BP1-dependent mRNP granule complex containing untranslated mRNAs. Part of the small subunit (SSU) processome, composed of more than 70 proteins and the RNA chaperone small nucleolar RNA (snoRNA) U3.

It localises to the cytoplasm. Its subcellular location is the membrane. The protein resides in the nucleus. It is found in the nucleolus. In terms of biological role, component of the small ribosomal subunit. The ribosome is a large ribonucleoprotein complex responsible for the synthesis of proteins in the cell. Part of the small subunit (SSU) processome, first precursor of the small eukaryotic ribosomal subunit. During the assembly of the SSU processome in the nucleolus, many ribosome biogenesis factors, an RNA chaperone and ribosomal proteins associate with the nascent pre-rRNA and work in concert to generate RNA folding, modifications, rearrangements and cleavage as well as targeted degradation of pre-ribosomal RNA by the RNA exosome. This chain is Small ribosomal subunit protein eS8 (RpS8), found in Drosophila melanogaster (Fruit fly).